The sequence spans 178 residues: Ribosome maturation factor RimM (178 aa).

The PRC barrel domain occupies Glu93–Leu170.

The protein belongs to the RimM family. As to quaternary structure, binds ribosomal protein uS19.

It is found in the cytoplasm. Its function is as follows. An accessory protein needed during the final step in the assembly of 30S ribosomal subunit, possibly for assembly of the head region. Essential for efficient processing of 16S rRNA. May be needed both before and after RbfA during the maturation of 16S rRNA. It has affinity for free ribosomal 30S subunits but not for 70S ribosomes. The polypeptide is Ribosome maturation factor RimM (Deinococcus geothermalis (strain DSM 11300 / CIP 105573 / AG-3a)).